The sequence spans 273 residues: Polyamine aminopropyltransferase (273 aa).

One can recognise a PABS domain in the interval 5–238 (ENWFSERYSD…GFWSFTIASE (234 aa)). Residue glutamine 34 participates in S-methyl-5'-thioadenosine binding. Residues histidine 65 and aspartate 90 each coordinate spermidine. S-methyl-5'-thioadenosine is bound by residues glutamate 109 and 140 to 141 (DG). Aspartate 158 functions as the Proton acceptor in the catalytic mechanism. A spermidine-binding site is contributed by 158 to 161 (DSTD). S-methyl-5'-thioadenosine is bound at residue proline 165.

The protein belongs to the spermidine/spermine synthase family. As to quaternary structure, homodimer or homotetramer.

Its subcellular location is the cytoplasm. The enzyme catalyses S-adenosyl 3-(methylsulfanyl)propylamine + putrescine = S-methyl-5'-thioadenosine + spermidine + H(+). It participates in amine and polyamine biosynthesis; spermidine biosynthesis; spermidine from putrescine: step 1/1. Catalyzes the irreversible transfer of a propylamine group from the amino donor S-adenosylmethioninamine (decarboxy-AdoMet) to putrescine (1,4-diaminobutane) to yield spermidine. The protein is Polyamine aminopropyltransferase of Thermoplasma volcanium (strain ATCC 51530 / DSM 4299 / JCM 9571 / NBRC 15438 / GSS1).